The following is a 196-amino-acid chain: 7-methyl-GTP pyrophosphatase (196 aa).

Aspartate 72 acts as the Proton acceptor in catalysis.

Belongs to the Maf family. YceF subfamily. A divalent metal cation is required as a cofactor.

The protein resides in the cytoplasm. It carries out the reaction N(7)-methyl-GTP + H2O = N(7)-methyl-GMP + diphosphate + H(+). Functionally, nucleoside triphosphate pyrophosphatase that hydrolyzes 7-methyl-GTP (m(7)GTP). May have a dual role in cell division arrest and in preventing the incorporation of modified nucleotides into cellular nucleic acids. This chain is 7-methyl-GTP pyrophosphatase, found in Neisseria gonorrhoeae (strain ATCC 700825 / FA 1090).